The following is a 1030-amino-acid chain: Beta-galactosidase (1030 aa).

The substrate site is built by Asn-99 and Asp-197. Position 197 (Asp-197) interacts with Na(+). 3 residues coordinate Mg(2+): Glu-411, His-413, and Glu-456. Substrate contacts are provided by residues Glu-456 and 532-535 (EYAH). Residue Glu-456 is the Proton donor of the active site. The active-site Nucleophile is the Glu-532. Residue Asn-592 coordinates Mg(2+). Positions 596 and 599 each coordinate Na(+). Substrate contacts are provided by Asn-599 and Trp-1004.

Belongs to the glycosyl hydrolase 2 family. As to quaternary structure, homotetramer. It depends on Mg(2+) as a cofactor. Na(+) is required as a cofactor.

It carries out the reaction Hydrolysis of terminal non-reducing beta-D-galactose residues in beta-D-galactosides.. This chain is Beta-galactosidase, found in Photobacterium profundum (strain SS9).